The primary structure comprises 206 residues: Small ribosomal subunit protein uS4 (206 aa).

An S4 RNA-binding domain is found at 96 to 157 (QRLDNVVYRM…KAKKQARIGA (62 aa)).

Belongs to the universal ribosomal protein uS4 family. In terms of assembly, part of the 30S ribosomal subunit. Contacts protein S5. The interaction surface between S4 and S5 is involved in control of translational fidelity.

One of the primary rRNA binding proteins, it binds directly to 16S rRNA where it nucleates assembly of the body of the 30S subunit. Its function is as follows. With S5 and S12 plays an important role in translational accuracy. This Idiomarina loihiensis (strain ATCC BAA-735 / DSM 15497 / L2-TR) protein is Small ribosomal subunit protein uS4.